The following is a 229-amino-acid chain: Cytochrome c oxidase subunit 2 (229 aa).

Residues M1–Y26 are Mitochondrial intermembrane-facing. A helical transmembrane segment spans residues A27 to S48. At S49–E62 the chain is on the mitochondrial matrix side. Residues T63–Q82 form a helical membrane-spanning segment. Residues L83 to E229 are Mitochondrial intermembrane-facing. H161, C196, E198, C200, H204, and M207 together coordinate Cu cation. Position 198 (E198) interacts with Mg(2+).

The protein belongs to the cytochrome c oxidase subunit 2 family. As to quaternary structure, component of the cytochrome c oxidase (complex IV, CIV), a multisubunit enzyme composed of a catalytic core of 3 subunits and several supernumerary subunits. The complex exists as a monomer or a dimer and forms supercomplexes (SCs) in the inner mitochondrial membrane with ubiquinol-cytochrome c oxidoreductase (cytochrome b-c1 complex, complex III, CIII). It depends on Cu cation as a cofactor.

The protein localises to the mitochondrion inner membrane. The enzyme catalyses 4 Fe(II)-[cytochrome c] + O2 + 8 H(+)(in) = 4 Fe(III)-[cytochrome c] + 2 H2O + 4 H(+)(out). In terms of biological role, component of the cytochrome c oxidase, the last enzyme in the mitochondrial electron transport chain which drives oxidative phosphorylation. The respiratory chain contains 3 multisubunit complexes succinate dehydrogenase (complex II, CII), ubiquinol-cytochrome c oxidoreductase (cytochrome b-c1 complex, complex III, CIII) and cytochrome c oxidase (complex IV, CIV), that cooperate to transfer electrons derived from NADH and succinate to molecular oxygen, creating an electrochemical gradient over the inner membrane that drives transmembrane transport and the ATP synthase. Cytochrome c oxidase is the component of the respiratory chain that catalyzes the reduction of oxygen to water. Electrons originating from reduced cytochrome c in the intermembrane space (IMS) are transferred via the dinuclear copper A center (CU(A)) of subunit 2 and heme A of subunit 1 to the active site in subunit 1, a binuclear center (BNC) formed by heme A3 and copper B (CU(B)). The BNC reduces molecular oxygen to 2 water molecules using 4 electrons from cytochrome c in the IMS and 4 protons from the mitochondrial matrix. This is Cytochrome c oxidase subunit 2 (COII) from Paracentrotus lividus (Common sea urchin).